The chain runs to 320 residues: Acetyl-coenzyme A carboxylase carboxyl transferase subunit alpha (320 aa).

The region spanning Ala33–Ala294 is the CoA carboxyltransferase C-terminal domain.

This sequence belongs to the AccA family. In terms of assembly, acetyl-CoA carboxylase is a heterohexamer composed of biotin carboxyl carrier protein (AccB), biotin carboxylase (AccC) and two subunits each of ACCase subunit alpha (AccA) and ACCase subunit beta (AccD).

The protein resides in the cytoplasm. It catalyses the reaction N(6)-carboxybiotinyl-L-lysyl-[protein] + acetyl-CoA = N(6)-biotinyl-L-lysyl-[protein] + malonyl-CoA. The protein operates within lipid metabolism; malonyl-CoA biosynthesis; malonyl-CoA from acetyl-CoA: step 1/1. Functionally, component of the acetyl coenzyme A carboxylase (ACC) complex. First, biotin carboxylase catalyzes the carboxylation of biotin on its carrier protein (BCCP) and then the CO(2) group is transferred by the carboxyltransferase to acetyl-CoA to form malonyl-CoA. The chain is Acetyl-coenzyme A carboxylase carboxyl transferase subunit alpha from Caulobacter vibrioides (strain ATCC 19089 / CIP 103742 / CB 15) (Caulobacter crescentus).